The primary structure comprises 365 residues: Virion host shutoff protein (365 aa).

It belongs to the herpesviridae VHS protein family.

The protein resides in the virion. Functionally, minor structural protein that acts as an endoribonuclease during lytic infection. Degrades host mRNAs in the cytoplasm by cutting them at preferred sites, including some in regions of translation initiation. The protein is Virion host shutoff protein (VHS) of Sus scrofa (Pig).